The sequence spans 251 residues: uncharacterized protein (251 aa).

12 to 36 (VVTGASSGIGEATARTLAAQGFHVV) contributes to the NADP(+) binding site. Serine 136 lines the substrate pocket. The active-site Proton acceptor is the tyrosine 149.

It belongs to the short-chain dehydrogenases/reductases (SDR) family.

This is an uncharacterized protein from Mycobacterium tuberculosis (strain CDC 1551 / Oshkosh).